A 315-amino-acid polypeptide reads, in one-letter code: 4-hydroxy-3-methylbut-2-enyl diphosphate reductase (315 aa).

[4Fe-4S] cluster is bound at residue cysteine 12. Residues histidine 41 and histidine 74 each coordinate (2E)-4-hydroxy-3-methylbut-2-enyl diphosphate. Positions 41 and 74 each coordinate dimethylallyl diphosphate. Isopentenyl diphosphate-binding residues include histidine 41 and histidine 74. Cysteine 96 contributes to the [4Fe-4S] cluster binding site. Histidine 124 provides a ligand contact to (2E)-4-hydroxy-3-methylbut-2-enyl diphosphate. Dimethylallyl diphosphate is bound at residue histidine 124. Residue histidine 124 coordinates isopentenyl diphosphate. Catalysis depends on glutamate 126, which acts as the Proton donor. Threonine 167 contacts (2E)-4-hydroxy-3-methylbut-2-enyl diphosphate. Cysteine 197 lines the [4Fe-4S] cluster pocket. Positions 225, 226, 227, and 269 each coordinate (2E)-4-hydroxy-3-methylbut-2-enyl diphosphate. Dimethylallyl diphosphate contacts are provided by serine 225, serine 226, asparagine 227, and serine 269. Serine 225, serine 226, asparagine 227, and serine 269 together coordinate isopentenyl diphosphate.

This sequence belongs to the IspH family. As to quaternary structure, homodimer. [4Fe-4S] cluster serves as cofactor.

The catalysed reaction is isopentenyl diphosphate + 2 oxidized [2Fe-2S]-[ferredoxin] + H2O = (2E)-4-hydroxy-3-methylbut-2-enyl diphosphate + 2 reduced [2Fe-2S]-[ferredoxin] + 2 H(+). It catalyses the reaction dimethylallyl diphosphate + 2 oxidized [2Fe-2S]-[ferredoxin] + H2O = (2E)-4-hydroxy-3-methylbut-2-enyl diphosphate + 2 reduced [2Fe-2S]-[ferredoxin] + 2 H(+). It functions in the pathway isoprenoid biosynthesis; dimethylallyl diphosphate biosynthesis; dimethylallyl diphosphate from (2E)-4-hydroxy-3-methylbutenyl diphosphate: step 1/1. The protein operates within isoprenoid biosynthesis; isopentenyl diphosphate biosynthesis via DXP pathway; isopentenyl diphosphate from 1-deoxy-D-xylulose 5-phosphate: step 6/6. Its function is as follows. Catalyzes the conversion of 1-hydroxy-2-methyl-2-(E)-butenyl 4-diphosphate (HMBPP) into a mixture of isopentenyl diphosphate (IPP) and dimethylallyl diphosphate (DMAPP). Acts in the terminal step of the DOXP/MEP pathway for isoprenoid precursor biosynthesis. This chain is 4-hydroxy-3-methylbut-2-enyl diphosphate reductase, found in Wigglesworthia glossinidia brevipalpis.